Consider the following 467-residue polypeptide: MMKKMTGKSFALSALVAASFMAAGAMASDKTEPRNEVYKDKFKNQYNSWHDTAKSEELVDALEQDPNMVILWAGYPFAKDYKAPRGHMYAVTDVRNTLRTGAPKDAEDGPLPMACWSCKSPDVPRLIEEQGEDGYFKGKWAKGGPEVTNAIGCGDCHDKGSPKLRISRPYVDRALDAIGTPFSKASKQDKESMVCAQCHVEYYFEKTEDKKGFVKFPWDMGVTVEKMEVYYDSIQFSDWTHALSKAPMLKAQHPEYETWKMGIHGMNNVSCVDCHMPKVTSADGKKFTDHKVGNPFDRFEETCATCHSQTKEFLVGVTNERKAKVKEMKLKAEEQLVKAHFEAEAAWKAGATEEEMKPILTDIRHSQWRWDLAIASHGVAAHAPDEALRILGTSVNKAADARVKLAQLLGKKGITDPVAVPDISTKAKAQAVLGMDMKQLVEEKEAFKKNILPKWDEEAKKREATYK.

The signal sequence occupies residues 1 to 27 (MMKKMTGKSFALSALVAASFMAAGAMA). H87 serves as a coordination point for heme c. Residues C115, C118, and K119 each contribute to the heme site. The heme c site is built by C153, C156, H157, C195, C198, and H199. Ca(2+)-binding residues include E201, Y202, K250, and Q252. A substrate-binding site is contributed by Y202. A substrate-binding site is contributed by H253. The heme c site is built by H264, C271, C274, H275, H290, C303, C306, H307, and H382.

It belongs to the cytochrome c-552 family. The cofactor is Ca(2+). It depends on heme c as a cofactor.

It localises to the periplasm. It catalyses the reaction 6 Fe(III)-[cytochrome c] + NH4(+) + 2 H2O = 6 Fe(II)-[cytochrome c] + nitrite + 8 H(+). The protein operates within nitrogen metabolism; nitrate reduction (assimilation). Catalyzes the reduction of nitrite to ammonia, consuming six electrons in the process. The polypeptide is Cytochrome c-552 (Shewanella sp. (strain W3-18-1)).